Here is a 214-residue protein sequence, read N- to C-terminus: Adenylate kinase (214 aa).

10–15 (GAGKGT) lines the ATP pocket. The segment at 30 to 59 (STGDMLRGAIKAGTDLGKQAKTLMDAGQLV) is NMP. AMP-binding positions include Thr-31, Arg-36, 57 to 59 (QLV), 85 to 88 (GFPR), and Gln-92. Residues 122–159 (GRRVHQASGRTYHVVYNPPKVEGKDDVTGEDLIIRADD) form an LID region. ATP-binding positions include Arg-123 and 132 to 133 (TY). The AMP site is built by Arg-156 and Arg-167. Lys-200 provides a ligand contact to ATP.

Belongs to the adenylate kinase family. In terms of assembly, monomer.

It is found in the cytoplasm. The enzyme catalyses AMP + ATP = 2 ADP. Its pathway is purine metabolism; AMP biosynthesis via salvage pathway; AMP from ADP: step 1/1. Its function is as follows. Catalyzes the reversible transfer of the terminal phosphate group between ATP and AMP. Plays an important role in cellular energy homeostasis and in adenine nucleotide metabolism. The protein is Adenylate kinase of Pasteurella multocida (strain Pm70).